Consider the following 331-residue polypeptide: MKAYAVPFEKFVNLADARLGTKIISVTDDWFADANRLFQPTPAVWKEGVFDDNGKWMDGWESRRKRFEGYDSAVIRLGVPGSIKGVDIDTSFFTGNFPPSASLEACFLASGEPDENTQWTEVLSAVELQGNSHHYHEISNDKAFSHLRFNIYPDGGVARLRVYGIPFRDWSAVGDNEQVDLAAALNGGRALACSDEHFGRMSNILNPGRGINMGDGWETARRRTPGNDWVIVALGHPGEIEKIIVDTLHFKGNYPDTCSIQGAFVKGGTDSQIETQSLFWRELLPSQKLEMHAEHTFVEQINALGPITHIRLNVFPDGGVSRLRVLGKVAK.

The protein belongs to the allantoicase family.

The catalysed reaction is allantoate + H2O = (S)-ureidoglycolate + urea. Its pathway is nitrogen metabolism; (S)-allantoin degradation; (S)-ureidoglycolate from allantoate (aminidohydrolase route): step 1/1. This is Probable allantoicase from Pseudomonas fluorescens (strain Pf0-1).